Reading from the N-terminus, the 423-residue chain is Zinc finger protein Gfi-1 (423 aa).

Residues Met1–Ser20 are SNAG domain. Residues Met1 to Cys76 are disordered. 2 positions are modified to phosphoserine: Ser20 and Ser57. A compositionally biased stretch (basic and acidic residues) spans Ser48–Ser57. The tract at residues Arg141–Cys258 is required for interaction with RELA. 6 consecutive C2H2-type zinc fingers follow at residues Tyr256–His279, Phe285–His307, Phe313–His335, Tyr341–His363, His369–His391, and Phe397–His420.

As to quaternary structure, interacts (via the zinc-finger domain) with ARIH2; the interaction prevents GFI1 ubiquitination and proteasomal degradation. Forms a complex with EHMT2 and HDAC1 to promote 'Lys-9' dimethylation of H3 (H3K9Me2) and repress expression of target genes. Interacts directly with EHMT2. Interacts with RUNX1T1; the interaction represses HDAC-mediated transcriptional activity. Interacts (via the C-terminal zinc fingers) with ZBTB17; the interaction results in the recruitment of GFI1 to the CDKN1A/p21 and CDKNIB promoters and repression of transcription. Interacts with U2AF1L4. Component of RCOR-GFI-KDM1A-HDAC complexes. Interacts directly with RCOR1, KDM1A and HDAC2. Also interacts with HDAC1. Component of the GFI1-AJUBA-HDAC1 repressor complex. Interacts directly with AJUBA (via its LIM domains); the interaction results in the HDAC-dependent corepression of a subset of GFI1 target genes and, occurs independently of the SNAG domain. Interacts with SPI1; the interaction inhibits SPI1 transcriptional activity targeted at macrophage-specific genes, repressing macrophage differentiation of myeloid progenitor cells and promoting granulocyte commitment. Interacts with PIAS3; the interaction relieves the inhibitory effect of PIAS3 on STAT3-mediated transcriptional activity. Interacts with RELA; the interaction occurs on liposaccharide (LPS) stimulation and controls RELA DNA binding activity and regulates endotoxin-mediated TOLL-like receptor inflammatory response. Post-translationally, ubiquitinated.

It localises to the nucleus. Its function is as follows. Transcription repressor essential for hematopoiesis. Functions in a cell-context and development-specific manner. Binds to 5'-TAAATCAC[AT]GCA-3' in the promoter region of a large number of genes. Component of several complexes, including the EHMT2-GFI1-HDAC1, AJUBA-GFI1-HDAC1 and RCOR-GFI-KDM1A-HDAC complexes, that suppress, via histone deacetylase (HDAC) recruitment, a number of genes implicated in multilineage blood cell development. Regulates neutrophil differentiation, promotes proliferation of lymphoid cells, and is required for granulocyte development. Inhibits SPI1 transcriptional activity at macrophage-specific genes, repressing macrophage differentiation of myeloid progenitor cells and promoting granulocyte commitment. Mediates, together with U2AF1L4, the alternative splicing of CD45 and controls T-cell receptor signaling. Regulates the endotoxin-mediated Toll-like receptor (TLR) inflammatory response by antagonizing RELA. Cooperates with CBFA2T2 to regulate ITGB1-dependent neurite growth. Controls cell-cycle progression by repressing CDKNIA/p21 transcription in response to TGFB1 via recruitment of GFI1 by ZBTB17 to the CDKNIA/p21 and CDKNIB promoters. Required for the maintenance of inner ear hair cells. In addition to its role in transcription, acts as a substrate adapter for PRMT1 in the DNA damage response. Facilitates the recognition of TP53BP1 and MRE11 substrates by PRMT1, promoting their methylation and the DNA damage response. The protein is Zinc finger protein Gfi-1 (Gfi1) of Mus musculus (Mouse).